The primary structure comprises 388 residues: Formate-dependent phosphoribosylglycinamide formyltransferase (388 aa).

Residues 20 to 21 (EL) and Glu-80 each bind N(1)-(5-phospho-beta-D-ribosyl)glycinamide. Residues Arg-112, Lys-153, 158 to 163 (SSGKGQ), 193 to 196 (EEFI), and Glu-201 each bind ATP. Residues 117–306 (RLAFEKLGLR…EFEIHARAIL (190 aa)) enclose the ATP-grasp domain. Glu-265 and Glu-277 together coordinate Mg(2+). N(1)-(5-phospho-beta-D-ribosyl)glycinamide contacts are provided by residues Asp-284, Lys-352, and 359-360 (RR).

The protein belongs to the PurK/PurT family. In terms of assembly, homodimer.

The enzyme catalyses N(1)-(5-phospho-beta-D-ribosyl)glycinamide + formate + ATP = N(2)-formyl-N(1)-(5-phospho-beta-D-ribosyl)glycinamide + ADP + phosphate + H(+). It functions in the pathway purine metabolism; IMP biosynthesis via de novo pathway; N(2)-formyl-N(1)-(5-phospho-D-ribosyl)glycinamide from N(1)-(5-phospho-D-ribosyl)glycinamide (formate route): step 1/1. Its function is as follows. Involved in the de novo purine biosynthesis. Catalyzes the transfer of formate to 5-phospho-ribosyl-glycinamide (GAR), producing 5-phospho-ribosyl-N-formylglycinamide (FGAR). Formate is provided by PurU via hydrolysis of 10-formyl-tetrahydrofolate. The sequence is that of Formate-dependent phosphoribosylglycinamide formyltransferase from Methanococcus maripaludis (strain DSM 14266 / JCM 13030 / NBRC 101832 / S2 / LL).